A 425-amino-acid polypeptide reads, in one-letter code: Peroxisomal membrane protein PEX14 (425 aa).

2 disordered regions span residues 49-89 (RSQG…YRNA) and 247-425 (DEPI…AAQS). Positions 56–76 (SSSVASQVSSYSPSASQSSVA) are enriched in low complexity. The SH3-binding signature appears at 89–97 (APPLPERDW). Residues 256-297 (PSLTTGANSLTSESSGRSSIPHSQSVPIRTQLTTPPSDSDTS) are compositionally biased toward polar residues. Composition is skewed to basic and acidic residues over residues 315–324 (DILRKEKNRT) and 333–366 (LGKDLESVAQSDPDKVEKYEGRRDLKSLERPEED).

It belongs to the peroxin-14 family. In terms of assembly, interacts with PEX13 (via SH3 domain); forming the PEX13-PEX14 docking complex. Interacts with PEX5 (via WxxxF/Y motifs). Interacts with PEX20 (via WxxxF/Y motifs). Interacts with PEX3, PEX7, PEX8 and PEX17. Phosphorylated on serine or threonine residues.

Its subcellular location is the peroxisome membrane. Component of the PEX13-PEX14 docking complex, a translocon channel that specifically mediates the import of peroxisomal cargo proteins bound to PEX5 or PEX20 receptors. The PEX13-PEX14 docking complex forms a large import pore which can be opened to a diameter of about 9 nm. Mechanistically, PEX5 (or PEX20) receptor along with cargo proteins associates with the PEX14 subunit of the PEX13-PEX14 docking complex in the cytosol, leading to the insertion of the receptor into the organelle membrane with the concomitant translocation of the cargo into the peroxisome matrix. The polypeptide is Peroxisomal membrane protein PEX14 (Komagataella pastoris (Yeast)).